The sequence spans 413 residues: Putative ankyrin repeat protein L92 (413 aa).

ANK repeat units lie at residues 1-28 (MCAC…DINC), 32-67 (DGMS…DVNL), 68-104 (TVDG…LFES), 105-134 (DDDD…NIEA), 137-170 (DGET…KTNI), 174-208 (DRKT…NINY), 212-242 (IGET…NPNI), and 246-275 (SGNT…SPEI).

The chain is Putative ankyrin repeat protein L92 from Acanthamoeba polyphaga mimivirus (APMV).